A 237-amino-acid polypeptide reads, in one-letter code: tRNA (guanine-N(1)-)-methyltransferase (237 aa).

S-adenosyl-L-methionine contacts are provided by residues G115 and 134–139 (LGDFVL).

It belongs to the RNA methyltransferase TrmD family. As to quaternary structure, homodimer.

It localises to the cytoplasm. The enzyme catalyses guanosine(37) in tRNA + S-adenosyl-L-methionine = N(1)-methylguanosine(37) in tRNA + S-adenosyl-L-homocysteine + H(+). Functionally, specifically methylates guanosine-37 in various tRNAs. This Synechococcus sp. (strain RCC307) protein is tRNA (guanine-N(1)-)-methyltransferase.